The following is a 408-amino-acid chain: Phosphatidylinositol transfer protein CSR1 (408 aa).

Position 2 is an N-acetylserine (S2). S2 is modified (phosphoserine). The 161-residue stretch at 157-317 folds into the CRAL-TRIO domain; sequence ETGVIKNLEL…YLGGENDNDL (161 aa).

This sequence belongs to the PITP family. As to quaternary structure, forms a complex with 2 TSA2 subunits. Binds phosphatidylinositol (PtdIns).

The protein resides in the cytoplasm. The protein localises to the microsome. It is found in the endosome. It catalyses the reaction a 1,2-diacyl-sn-glycero-3-phospho-(1D-myo-inositol)(in) = a 1,2-diacyl-sn-glycero-3-phospho-(1D-myo-inositol)(out). Non-classical phosphatidylinositol (PtdIns) transfer protein (PITP), which exhibits PtdIns-binding/transfer activity in the absence of detectable PtdCho-binding/transfer activity. Activates SPO14/PLD1 (phospholipase D1) by stimulating phosphoinositide synthesis via the STT4 PtdIns 4-kinase. Modulates ArfGAP function through effects on SPO14 activity. Inhibits phosphatidylcholine degradation by PLB1 (phospholipase B1). May also regulate post-Golgi membrane-trafficking events and have a role resistance to oxidative stress. Inhibits fatty acid synthase activity in response to heme depletion and oleic acid starvation, preventing saturated fatty acid (SFA) accumulation. The polypeptide is Phosphatidylinositol transfer protein CSR1 (CSR1) (Saccharomyces cerevisiae (strain ATCC 204508 / S288c) (Baker's yeast)).